Reading from the N-terminus, the 475-residue chain is Arginine biosynthesis bifunctional protein ArgJ 1, mitochondrial (475 aa).

Threonine 204, lysine 233, threonine 244, glutamate 331, asparagine 470, and threonine 475 together coordinate substrate. The active-site Nucleophile is the threonine 244.

This sequence belongs to the ArgJ family. As to quaternary structure, heterodimer of an alpha and a beta chain. The alpha and beta chains are autoproteolytically processed from a single precursor protein within the mitochondrion.

The protein localises to the mitochondrion matrix. It catalyses the reaction N(2)-acetyl-L-ornithine + L-glutamate = N-acetyl-L-glutamate + L-ornithine. It carries out the reaction L-glutamate + acetyl-CoA = N-acetyl-L-glutamate + CoA + H(+). Its pathway is amino-acid biosynthesis; L-arginine biosynthesis; L-ornithine and N-acetyl-L-glutamate from L-glutamate and N(2)-acetyl-L-ornithine (cyclic): step 1/1. It participates in amino-acid biosynthesis; L-arginine biosynthesis; N(2)-acetyl-L-ornithine from L-glutamate: step 1/4. In terms of biological role, catalyzes two activities which are involved in the cyclic version of arginine biosynthesis: the synthesis of acetylglutamate from glutamate and acetyl-CoA, and of ornithine by transacetylation between acetylornithine and glutamate. This is Arginine biosynthesis bifunctional protein ArgJ 1, mitochondrial from Botryotinia fuckeliana (strain B05.10) (Noble rot fungus).